Reading from the N-terminus, the 306-residue chain is tRNA pseudouridine synthase B (306 aa).

Asp47 serves as the catalytic Nucleophile.

The protein belongs to the pseudouridine synthase TruB family. Type 1 subfamily.

It catalyses the reaction uridine(55) in tRNA = pseudouridine(55) in tRNA. Responsible for synthesis of pseudouridine from uracil-55 in the psi GC loop of transfer RNAs. The protein is tRNA pseudouridine synthase B of Neisseria gonorrhoeae (strain NCCP11945).